Here is a 489-residue protein sequence, read N- to C-terminus: Cysteine--tRNA ligase (489 aa).

Cys-29 serves as a coordination point for Zn(2+). The 'HIGH' region signature appears at 31 to 41; the sequence is VTVYDYCHLGH. Zn(2+)-binding residues include Cys-215, His-240, and Glu-244. The 'KMSKS' region signature appears at 272 to 276; the sequence is KMSKS. Lys-275 is an ATP binding site.

This sequence belongs to the class-I aminoacyl-tRNA synthetase family. In terms of assembly, monomer. Zn(2+) serves as cofactor.

The protein resides in the cytoplasm. The catalysed reaction is tRNA(Cys) + L-cysteine + ATP = L-cysteinyl-tRNA(Cys) + AMP + diphosphate. The sequence is that of Cysteine--tRNA ligase from Trichodesmium erythraeum (strain IMS101).